The primary structure comprises 196 residues: Protein GrpE (196 aa).

Over residues 1 to 26 (MQEPHNQEPIEEQKLSEMEDTLEKQH) the composition is skewed to basic and acidic residues. The interval 1-40 (MQEPHNQEPIEEQKLSEMEDTLEKQHSGASTENTERAEEG) is disordered.

Belongs to the GrpE family. In terms of assembly, homodimer.

The protein localises to the cytoplasm. Participates actively in the response to hyperosmotic and heat shock by preventing the aggregation of stress-denatured proteins, in association with DnaK and GrpE. It is the nucleotide exchange factor for DnaK and may function as a thermosensor. Unfolded proteins bind initially to DnaJ; upon interaction with the DnaJ-bound protein, DnaK hydrolyzes its bound ATP, resulting in the formation of a stable complex. GrpE releases ADP from DnaK; ATP binding to DnaK triggers the release of the substrate protein, thus completing the reaction cycle. Several rounds of ATP-dependent interactions between DnaJ, DnaK and GrpE are required for fully efficient folding. The polypeptide is Protein GrpE (Nitrosomonas eutropha (strain DSM 101675 / C91 / Nm57)).